A 216-amino-acid polypeptide reads, in one-letter code: Octanoyltransferase (216 aa).

The BPL/LPL catalytic domain occupies 33–212 (AHTPDELWLV…ILSNILGLTA (180 aa)). Substrate is bound by residues 72–79 (RGGQVTYH), 139–141 (SLG), and 152–154 (GVA). Catalysis depends on cysteine 170, which acts as the Acyl-thioester intermediate.

It belongs to the LipB family.

Its subcellular location is the cytoplasm. The enzyme catalyses octanoyl-[ACP] + L-lysyl-[protein] = N(6)-octanoyl-L-lysyl-[protein] + holo-[ACP] + H(+). It functions in the pathway protein modification; protein lipoylation via endogenous pathway; protein N(6)-(lipoyl)lysine from octanoyl-[acyl-carrier-protein]: step 1/2. Catalyzes the transfer of endogenously produced octanoic acid from octanoyl-acyl-carrier-protein onto the lipoyl domains of lipoate-dependent enzymes. Lipoyl-ACP can also act as a substrate although octanoyl-ACP is likely to be the physiological substrate. The sequence is that of Octanoyltransferase from Saccharophagus degradans (strain 2-40 / ATCC 43961 / DSM 17024).